Here is a 336-residue protein sequence, read N- to C-terminus: Holliday junction branch migration complex subunit RuvB (336 aa).

The interval 1–180 (MRRTGIRLSW…FGIVEHLEYY (180 aa)) is large ATPase domain (RuvB-L). Residues Leu18, Arg19, Gly60, Lys63, Thr64, Thr65, 127–129 (EDF), Arg170, Tyr180, and Arg217 each bind ATP. Position 64 (Thr64) interacts with Mg(2+). Residues 181–251 (TPEELAQGVM…RALEALAALG (71 aa)) are small ATPAse domain (RuvB-S). Residues 254-336 (ELGLEKRDRE…PPPVGPLLEP (83 aa)) form a head domain (RuvB-H) region. DNA contacts are provided by Arg309 and Arg314.

It belongs to the RuvB family. As to quaternary structure, homohexamer. Forms an RuvA(8)-RuvB(12)-Holliday junction (HJ) complex. HJ DNA is sandwiched between 2 RuvA tetramers; dsDNA enters through RuvA and exits via RuvB. An RuvB hexamer assembles on each DNA strand where it exits the tetramer. Each RuvB hexamer is contacted by two RuvA subunits (via domain III) on 2 adjacent RuvB subunits; this complex drives branch migration. In the full resolvosome a probable DNA-RuvA(4)-RuvB(12)-RuvC(2) complex forms which resolves the HJ.

The protein resides in the cytoplasm. The enzyme catalyses ATP + H2O = ADP + phosphate + H(+). Its function is as follows. The RuvA-RuvB-RuvC complex processes Holliday junction (HJ) DNA during genetic recombination and DNA repair, while the RuvA-RuvB complex plays an important role in the rescue of blocked DNA replication forks via replication fork reversal (RFR). RuvA specifically binds to HJ cruciform DNA, conferring on it an open structure. The RuvB hexamer acts as an ATP-dependent pump, pulling dsDNA into and through the RuvAB complex. RuvB forms 2 homohexamers on either side of HJ DNA bound by 1 or 2 RuvA tetramers; 4 subunits per hexamer contact DNA at a time. Coordinated motions by a converter formed by DNA-disengaged RuvB subunits stimulates ATP hydrolysis and nucleotide exchange. Immobilization of the converter enables RuvB to convert the ATP-contained energy into a lever motion, pulling 2 nucleotides of DNA out of the RuvA tetramer per ATP hydrolyzed, thus driving DNA branch migration. The RuvB motors rotate together with the DNA substrate, which together with the progressing nucleotide cycle form the mechanistic basis for DNA recombination by continuous HJ branch migration. Branch migration allows RuvC to scan DNA until it finds its consensus sequence, where it cleaves and resolves cruciform DNA. The protein is Holliday junction branch migration complex subunit RuvB of Thermus thermophilus (strain ATCC BAA-163 / DSM 7039 / HB27).